The following is a 326-amino-acid chain: MVYCTASLPLLLLLLVGLLAGEAFAEQCGRQAGGALCPGGLCCSQFGWCGSTSDYCGPTCQSQCGGVTPSPGGGVASLISQSVFNQMLKHRNDAACQAKGFYTYNAFIAAANSFNGFASVGDTATRKREIAAFLAQTSHETTGGWATAPDGPYAWGYCFLKEQGNPPDYCVPTAQWPCAPGKKYYGRGPIQISYNYNYGPAGRAIGYDLINNPDAVATDPVISFKTALWFWMTPQSPKPSCHNVITGRWTPSAADRAAGRLPGYGVITNIINGGIECGKGFNDKVADRIGFYKRYCDLLGVSYGSNLDCYNQRSFGVSTNPLAASS.

An N-terminal signal peptide occupies residues 1–25 (MVYCTASLPLLLLLLVGLLAGEAFA). The region spanning 26–66 (EQCGRQAGGALCPGGLCCSQFGWCGSTSDYCGPTCQSQCGG) is the Chitin-binding type-1 domain. 7 disulfides stabilise this stretch: cysteine 28/cysteine 43, cysteine 37/cysteine 49, cysteine 42/cysteine 56, cysteine 60/cysteine 64, cysteine 96/cysteine 158, cysteine 170/cysteine 178, and cysteine 277/cysteine 309. Catalysis depends on glutamate 140, which acts as the Proton donor.

Belongs to the glycosyl hydrolase 19 family. Chitinase class I subfamily. In terms of tissue distribution, expressed in the pulp of the fruit (at protein level). Expressed in mesocarp (at protein level).

The enzyme catalyses Random endo-hydrolysis of N-acetyl-beta-D-glucosaminide (1-&gt;4)-beta-linkages in chitin and chitodextrins.. Its function is as follows. Defense against chitin-containing fungal pathogens. Has in vitro antifungal activity against F.oxysporum inhibiting its growth and the branching of its hyphae. Has endochitinase activity, but no exochitinase or lysozyme activities. In Persea americana (Avocado), this protein is Endochitinase.